A 200-amino-acid polypeptide reads, in one-letter code: dITP/XTP pyrophosphatase (200 aa).

8-13 is a binding site for substrate; the sequence is TRNAGK. The Proton acceptor role is filled by aspartate 72. Mg(2+) is bound at residue aspartate 72. Residues serine 73, 155–158, lysine 178, and 183–184 contribute to the substrate site; these read FGYD and HR.

The protein belongs to the HAM1 NTPase family. In terms of assembly, homodimer. The cofactor is Mg(2+).

It carries out the reaction XTP + H2O = XMP + diphosphate + H(+). The enzyme catalyses dITP + H2O = dIMP + diphosphate + H(+). The catalysed reaction is ITP + H2O = IMP + diphosphate + H(+). In terms of biological role, pyrophosphatase that catalyzes the hydrolysis of nucleoside triphosphates to their monophosphate derivatives, with a high preference for the non-canonical purine nucleotides XTP (xanthosine triphosphate), dITP (deoxyinosine triphosphate) and ITP. Seems to function as a house-cleaning enzyme that removes non-canonical purine nucleotides from the nucleotide pool, thus preventing their incorporation into DNA/RNA and avoiding chromosomal lesions. The chain is dITP/XTP pyrophosphatase from Streptomyces coelicolor (strain ATCC BAA-471 / A3(2) / M145).